The following is a 632-amino-acid chain: Chaperone protein HtpG (632 aa).

Residues 1-343 (MSEQTINNKE…SNDLALNVSR (343 aa)) form an a; substrate-binding region. The segment at 344 to 560 (EILQDNKVTQ…DFEMGTQMAK (217 aa)) is b. Positions 561–632 (LLEAAGQAAP…LSAMNQLLSK (72 aa)) are c.

Belongs to the heat shock protein 90 family. Homodimer.

It localises to the cytoplasm. Functionally, molecular chaperone. Has ATPase activity. The chain is Chaperone protein HtpG from Aliivibrio salmonicida (strain LFI1238) (Vibrio salmonicida (strain LFI1238)).